The chain runs to 163 residues: MIAFIKHQVKTFGLIELFKGLAVTGKYLFKKKITVRYPEEKTPLSPRFRGHHALRRYENGEERCIACKLCEAVCPANAITIESEERDDGTRRTTQYDIDMFKCIYCGFCEEACPVDAVVETRVFEYEFHERGTHIMTKEQLLAFGDKHESQIAADRAADAKYR.

2 4Fe-4S ferredoxin-type domains span residues 55–84 (RRYE…IESE) and 94–123 (TQYD…ETRV). The [4Fe-4S] cluster site is built by Cys-64, Cys-67, Cys-70, Cys-74, Cys-103, Cys-106, Cys-109, and Cys-113.

It belongs to the complex I 23 kDa subunit family. As to quaternary structure, NDH-1 is composed of 14 different subunits. Subunits NuoA, H, J, K, L, M, N constitute the membrane sector of the complex. It depends on [4Fe-4S] cluster as a cofactor.

Its subcellular location is the cell inner membrane. The catalysed reaction is a quinone + NADH + 5 H(+)(in) = a quinol + NAD(+) + 4 H(+)(out). Functionally, NDH-1 shuttles electrons from NADH, via FMN and iron-sulfur (Fe-S) centers, to quinones in the respiratory chain. The immediate electron acceptor for the enzyme in this species is believed to be ubiquinone. Couples the redox reaction to proton translocation (for every two electrons transferred, four hydrogen ions are translocated across the cytoplasmic membrane), and thus conserves the redox energy in a proton gradient. This Hydrogenovibrio crunogenus (strain DSM 25203 / XCL-2) (Thiomicrospira crunogena) protein is NADH-quinone oxidoreductase subunit I.